Reading from the N-terminus, the 272-residue chain is Secretagogin (272 aa).

EF-hand domains lie at 8 to 43 (LDAA…MLKK), 53 to 89 (ERVQ…QEEN), 101 to 136 (DNSV…LFLQ), 145 to 180 (KLDE…QENF), 193 to 228 (ERKR…MMEL), and 237 to 272 (DLDK…KHKP). 5 residues coordinate Ca(2+): Asp-21, Asp-23, Asn-25, Tyr-27, and Glu-32. Residues Asp-114, Asp-116, Ser-118, Tyr-120, Glu-125, Asp-158, Asn-160, Asp-162, Arg-164, Asp-169, Asp-206, Ser-208, Thr-210, Glu-217, Asp-250, Asn-252, Asp-254, Lys-256, and Glu-261 each coordinate Ca(2+).

Its subcellular location is the cytoplasm. This is Secretagogin (scgn) from Danio rerio (Zebrafish).